We begin with the raw amino-acid sequence, 79 residues long: Sec-independent protein translocase protein TatA (79 aa).

A helical transmembrane segment spans residues 1-21 (MGSLSIWHWLIVLLIVALVFG). A disordered region spans residues 46–79 (ADAPAAEAQQRELPRNGAVDVEAKEKTPRSGDYR). Basic and acidic residues predominate over residues 66-79 (VEAKEKTPRSGDYR).

This sequence belongs to the TatA/E family. The Tat system comprises two distinct complexes: a TatABC complex, containing multiple copies of TatA, TatB and TatC subunits, and a separate TatA complex, containing only TatA subunits. Substrates initially bind to the TatABC complex, which probably triggers association of the separate TatA complex to form the active translocon.

The protein localises to the cell inner membrane. Functionally, part of the twin-arginine translocation (Tat) system that transports large folded proteins containing a characteristic twin-arginine motif in their signal peptide across membranes. TatA could form the protein-conducting channel of the Tat system. The protein is Sec-independent protein translocase protein TatA of Paraburkholderia phytofirmans (strain DSM 17436 / LMG 22146 / PsJN) (Burkholderia phytofirmans).